Here is a 505-residue protein sequence, read N- to C-terminus: ATP synthase subunit alpha, chloroplastic (505 aa).

Position 170-177 (170-177) interacts with ATP; the sequence is GDRQTGKT.

Belongs to the ATPase alpha/beta chains family. F-type ATPases have 2 components, CF(1) - the catalytic core - and CF(0) - the membrane proton channel. CF(1) has five subunits: alpha(3), beta(3), gamma(1), delta(1), epsilon(1). CF(0) has four main subunits: a, b, b' and c.

It is found in the plastid. The protein localises to the chloroplast thylakoid membrane. It carries out the reaction ATP + H2O + 4 H(+)(in) = ADP + phosphate + 5 H(+)(out). Its function is as follows. Produces ATP from ADP in the presence of a proton gradient across the membrane. The alpha chain is a regulatory subunit. The polypeptide is ATP synthase subunit alpha, chloroplastic (Mesostigma viride (Green alga)).